The following is a 1334-amino-acid chain: WASH complex subunit 2 (1334 aa).

Positions 1–219 (MNRTSPDSER…VGSDRGSIVD (219 aa)) are sufficient for interaction with WASHC3, WASHC4 and WASHC5; required for interaction with WASHC1. Residues S157, S159, S204, S205, and S209 each carry the phosphoserine modification. Positions 201 to 213 (GELSSEEGSVGSD) are enriched in low complexity. The tract at residues 201–471 (GELSSEEGSV…SKPSKTDKVK (271 aa)) is disordered. 2 stretches are compositionally biased toward acidic residues: residues 219–232 (DSED…SDED) and 249–274 (SDEE…EDIE). Residue S284 is modified to Phosphoserine. The segment covering 289–324 (LAARIKGDISNQRKEGQTDGKPQKTVKEKKERRTPA) has biased composition (basic and acidic residues). At T322 the chain carries Phosphothreonine. Residues 347 to 594 (SRGGLFSNGQ…QTSSLQPQSQ (248 aa)) are sufficient for interaction with CCDC93. The interaction with VPS35 stretch occupies residues 348–1334 (RGGLFSNGQG…DDPLNAFGSQ (987 aa)). Residues 358-368 (LFDDEDESDLF) carry the LFa 1 motif. The residue at position 388 (S388) is a Phosphoserine. Short sequence motifs (LFa) lie at residues 441-457 (LFDD…NNFF) and 476-485 (IFDDDEGDLF). The segment covering 442–454 (FDDDDNDNDEDDN) has biased composition (acidic residues). Residues 492–650 (LPAASVSQTH…DSGATQGQEA (159 aa)) are disordered. The segment covering 513 to 530 (LPSSKNLKLVSETKTQKG) has biased composition (polar residues). 2 short sequence motifs (LFa) span residues 531–542 (LFSDEEDSEDLF) and 566–577 (LFGDEDEEDSLF). Phosphoserine is present on residues S533 and S538. Over residues 541 to 561 (LFSSQSSSKPKSASLPSSQPP) the composition is skewed to low complexity. Composition is skewed to polar residues over residues 584–594 (KQTSSLQPQSQ) and 601–611 (EQPSKKTSALL). Residues S613 and S614 each carry the phosphoserine modification. Positions 625–639 (SHTKLASDNKSKGEL) are enriched in basic and acidic residues. 2 short sequence motifs (LFa) span residues 658-670 (LFED…VDLF) and 686-698 (LFED…SSLF). The disordered stretch occupies residues 691–837 (AESGSSLFGL…SRPKSTGVFQ (147 aa)). Phosphoserine is present on residues S723, S747, S752, S783, and S798. The segment covering 800-811 (FDEDEDKVEDES) has biased composition (acidic residues). Basic and acidic residues predominate over residues 818–830 (DGREKGLKTDSRP). Short sequence motifs (LFa) lie at residues 835–843 (VFQDEELLF) and 852–858 (DPDVDLF). Disordered regions lie at residues 862-948 (KKIR…PSSR) and 1014-1225 (AQAD…SKTH). Residues S870 and S873 each carry the phosphoserine modification. Positions 874–884 (LFGDDEDDDLF) match the LFa 10 motif. The segment covering 894–906 (PEKKGTLKKDHPV) has biased composition (basic and acidic residues). Over residues 908–919 (LKNQDPLDSTQG) the composition is skewed to polar residues. The segment at 932–1334 (QDSSGLTPFK…DDPLNAFGSQ (403 aa)) is interaction with phospholipids. Residues 1023–1041 (NKSRVKVRGKRRPQTRAAR) are compositionally biased toward basic residues. Residues 1024–1042 (KSRVKVRGKRRPQTRAARR) form a required for interaction with F-actin-capping protein subunit alpha (CAPZA1 or CAPZA2 or CAPZA3) region. A phosphoserine mark is found at S1049, S1067, S1084, and S1109. Short sequence motifs (LFa) lie at residues 1124–1131 (LFDSGDIF), 1164–1178 (AFPD…EDLF), and 1194–1202 (LLEDEEDLF). 3 positions are modified to phosphoserine: S1169, S1172, and S1173. Over residues 1203 to 1225 (ADPRGKKNERKPDSHQDSVSKTH) the composition is skewed to basic and acidic residues. Short sequence motifs (LFa) lie at residues 1227-1233 (IFEDDIF), 1255-1263 (LFDDNIDIF), and 1283-1292 (MFDDDTDDIF). The disordered stretch occupies residues 1294–1334 (SGLQAKASKPKSQSAEAASEQRSEHKVASIFDDPLNAFGSQ). Positions 1297-1311 (QAKASKPKSQSAEAA) are enriched in low complexity. An LFa 17 motif is present at residues 1323–1331 (IFDDPLNAF). A Phosphoserine modification is found at S1333.

The protein belongs to the FAM21 family. In terms of assembly, component of the WASH core complex also described as WASH regulatory complex (SHRC) composed of WASHC1, WASHC2, WASHC3, WASHC4 and WASHC5; in the complex interacts (via N-terminus) directly with WASHC1. The WASH core complex associates with the F-actin-capping protein dimer (formed by CAPZA1, CAPZA2 or CAPZA3 and CAPZB) in a transient or substoichiometric manner which was initially described as WASH complex. Interacts with VPS35; mediates the association with the retromer CSC complex. Interacts with FKBP15. Interacts with CCDC93, CCDC22, VPS35L; indicative for an association of the WASH core complex with the CCC and retriever complexes. Directly interacts with TBC1D23.

The protein localises to the early endosome membrane. The protein resides in the cell membrane. Functionally, acts as a component of the WASH core complex that functions as a nucleation-promoting factor (NPF) at the surface of endosomes, where it recruits and activates the Arp2/3 complex to induce actin polymerization, playing a key role in the fission of tubules that serve as transport intermediates during endosome sorting. Mediates the recruitment of the WASH core complex to endosome membranes via binding to phospholipids and VPS35 of the retromer CSC. Mediates the recruitment of the F-actin-capping protein dimer to the WASH core complex probably promoting localized F-actin polymerization needed for vesicle scission. Via its C-terminus binds various phospholipids, most strongly phosphatidylinositol 4-phosphate (PtdIns-(4)P), phosphatidylinositol 5-phosphate (PtdIns-(5)P) and phosphatidylinositol 3,5-bisphosphate (PtdIns-(3,5)P2). Involved in the endosome-to-plasma membrane trafficking and recycling of SNX27-retromer-dependent cargo proteins, such as GLUT1. Required for the association of DNAJC13, ENTR1, ANKRD50 with retromer CSC subunit VPS35. Required for the endosomal recruitment of CCC and retriever complexes subunits COMMD1 and CCDC93 as well as the retrievere complex subunit VPS35L. The protein is WASH complex subunit 2 of Mus musculus (Mouse).